The primary structure comprises 1153 residues: Cingulin (1153 aa).

The head stretch occupies residues 1–342 (MAEPRGPVDH…LVMTTGSAKV (342 aa)). Positions 17 to 37 (ITEPAGDAQMRTGRRPAKDAR) are disordered. Positions 38 to 52 (ANTYGVAVRVQGIAG) match the ZIM motif. The interaction with TJP1/ZO1 stretch occupies residues 44–57 (AVRVQGIAGQPFVV). A phosphoserine mark is found at Ser86, Ser126, Ser128, Ser131, Ser146, Ser205, Ser208, and Ser324. Disordered stretches follow at residues 131–151 (SLLG…LELG) and 177–253 (DRHQ…SRAR). Over residues 207–220 (DSRHLRDPPEDRRS) the composition is skewed to basic and acidic residues. The stretch at 343 to 1110 (LAGQGELAQK…ALEKDSWRKA (768 aa)) forms a coiled coil. At Lys562 the chain carries N6-acetyllysine. Disordered stretches follow at residues 755 to 796 (AQRG…QKRL), 823 to 861 (QSQL…LSRL), and 1110 to 1131 (AARS…EEFD). Composition is skewed to basic and acidic residues over residues 772–796 (ALEE…QKRL) and 827–853 (EDYK…EAEK). The tail stretch occupies residues 1111-1153 (ARSAAESSLQQEGLSSDEEFDGVYNPNSIASLLTESGLQTSSC). The span at 1115-1124 (AESSLQQEGL) shows a compositional bias: polar residues. Residues Ser1125 and Ser1126 each carry the phosphoserine modification.

It belongs to the cingulin family. In terms of assembly, homodimer. Interacts with TJP1/ZO1 and SPEF1.

It is found in the cell junction. Its subcellular location is the tight junction. Its function is as follows. Probably plays a role in the formation and regulation of the tight junction (TJ) paracellular permeability barrier. The polypeptide is Cingulin (Sorex araneus (Eurasian common shrew)).